We begin with the raw amino-acid sequence, 167 residues long: MSKFIDPEKLEIEDRVVAINRVTKVVKGGRRLRFAALVVVGDKNGHVGFGTGKAQEVPEAIRKAVETARKSLIEVPIVGTTLPHEAVGVYGGGRILMKPALEGSGVAAGGAVRAVMELAGIDDVTSKRLGSNTAVNVVRATFEGLKSMRNAEEVAALRGVSVDHLAE.

An S5 DRBM domain is found at 12–75 (IEDRVVAINR…ETARKSLIEV (64 aa)).

It belongs to the universal ribosomal protein uS5 family. As to quaternary structure, part of the 30S ribosomal subunit. Contacts proteins S4 and S8.

In terms of biological role, with S4 and S12 plays an important role in translational accuracy. Functionally, located at the back of the 30S subunit body where it stabilizes the conformation of the head with respect to the body. The polypeptide is Small ribosomal subunit protein uS5 (Pediococcus pentosaceus (strain ATCC 25745 / CCUG 21536 / LMG 10740 / 183-1w)).